Consider the following 132-residue polypeptide: Protein FAM174C (132 aa).

Residues 1-26 (MGPRVLQPPLLLLLLALLLAALPCGA) form the signal peptide. The tract at residues 34–66 (PAQVTLSPPPAVTNGSQPGAPHNSTHTRPPGAS) is disordered. A compositionally biased stretch (polar residues) spans 46–60 (TNGSQPGAPHNSTHT). Asn-47 carries an N-linked (GlcNAc...) asparagine glycan. A helical membrane pass occupies residues 73–93 (SFYVILGFCGLTALYFLIRAF). Thr-113 bears the Phosphothreonine mark. Residues 113-132 (TEMASLDSDEETVFESRNLR) form a disordered region. Ser-117 and Ser-120 each carry phosphoserine.

Belongs to the FAM174 family.

It localises to the membrane. This Homo sapiens (Human) protein is Protein FAM174C.